A 480-amino-acid polypeptide reads, in one-letter code: Glutamate--tRNA ligase (480 aa).

The short motif at 9-19 (PSPTGDPHVGT) is the 'HIGH' region element. Positions 253 to 257 (KISKR) match the 'KMSKS' region motif. An ATP-binding site is contributed by lysine 256.

Belongs to the class-I aminoacyl-tRNA synthetase family. Glutamate--tRNA ligase type 1 subfamily. Monomer.

The protein resides in the cytoplasm. The enzyme catalyses tRNA(Glu) + L-glutamate + ATP = L-glutamyl-tRNA(Glu) + AMP + diphosphate. Its function is as follows. Catalyzes the attachment of glutamate to tRNA(Glu) in a two-step reaction: glutamate is first activated by ATP to form Glu-AMP and then transferred to the acceptor end of tRNA(Glu). This Deinococcus geothermalis (strain DSM 11300 / CIP 105573 / AG-3a) protein is Glutamate--tRNA ligase.